The primary structure comprises 202 residues: uncharacterized protein (202 aa).

Residues 116-196 (LDLHGMTCSE…GKGTTWVLLK (81 aa)) enclose the Smr domain.

This is an uncharacterized protein from Treponema pallidum (strain Nichols).